Reading from the N-terminus, the 335-residue chain is Biotin synthase (335 aa).

The Radical SAM core domain occupies N51–R278. Residues C66, C70, and C73 each coordinate [4Fe-4S] cluster. Residues C110, C141, C201, and R273 each contribute to the [2Fe-2S] cluster site.

The protein belongs to the radical SAM superfamily. Biotin synthase family. As to quaternary structure, homodimer. The cofactor is [4Fe-4S] cluster. [2Fe-2S] cluster is required as a cofactor.

The catalysed reaction is (4R,5S)-dethiobiotin + (sulfur carrier)-SH + 2 reduced [2Fe-2S]-[ferredoxin] + 2 S-adenosyl-L-methionine = (sulfur carrier)-H + biotin + 2 5'-deoxyadenosine + 2 L-methionine + 2 oxidized [2Fe-2S]-[ferredoxin]. Its pathway is cofactor biosynthesis; biotin biosynthesis; biotin from 7,8-diaminononanoate: step 2/2. Functionally, catalyzes the conversion of dethiobiotin (DTB) to biotin by the insertion of a sulfur atom into dethiobiotin via a radical-based mechanism. The polypeptide is Biotin synthase (Bordetella bronchiseptica (strain ATCC BAA-588 / NCTC 13252 / RB50) (Alcaligenes bronchisepticus)).